Reading from the N-terminus, the 130-residue chain is Ornithine decarboxylase antizyme (130 aa).

Basic and acidic residues predominate over residues 1–14; sequence SDVPVHHRTDHDRA. A disordered region spans residues 1 to 56; that stretch reads SDVPVHHRTDHDRASLLTGSSRKSSVDSAGGSLFEASSRASSPSSSSSSECSDTES. Polar residues predominate over residues 17–27; that stretch reads LTGSSRKSSVD. The span at 32 to 51 shows a compositional bias: low complexity; that stretch reads SLFEASSRASSPSSSSSSEC.

It belongs to the ODC antizyme family. Interacts with ODC1 and thereby sterically blocks ODC homodimerization.

Ornithine decarboxylase (ODC) antizyme protein that negatively regulates ODC activity and intracellular polyamine biosynthesis and uptake in response to increased intracellular polyamine levels. Binds to ODC monomers, inhibiting the assembly of the functional ODC homodimer, and targets the monomers for ubiquitin-independent proteolytic destruction by the 26S proteasome. This Drosophila virilis (Fruit fly) protein is Ornithine decarboxylase antizyme (Oda).